A 212-amino-acid chain; its full sequence is Nuclear transcription factor Y subunit C-7 (212 aa).

The span at 1–10 (MEENNGNNNH) shows a compositional bias: polar residues. 2 disordered regions span residues 1 to 23 (MEENNGNNNHYLPQPSSSQLPPP) and 190 to 212 (EWPAVPGDGEEAAGEIGGSSGGN).

Belongs to the NFYC/HAP5 subunit family. As to quaternary structure, heterotrimeric transcription factor composed of three components, NF-YA, NF-YB and NF-YC. NF-YB and NF-YC must interact and dimerize for NF-YA association and DNA binding. In terms of tissue distribution, expressed in flowers.

It is found in the nucleus. In terms of biological role, stimulates the transcription of various genes by recognizing and binding to a CCAAT motif in promoters. This Arabidopsis thaliana (Mouse-ear cress) protein is Nuclear transcription factor Y subunit C-7 (NFYC7).